Consider the following 363-residue polypeptide: Mitogen-activated protein kinase 4 (363 aa).

Residues 30–318 (YDLVKVVGFG…AKQVMEHPYF (289 aa)) enclose the Protein kinase domain. Residues 36 to 44 (VGFGACGTV) and Lys-59 each bind ATP. Asp-156 serves as the catalytic Proton acceptor. A phosphoserine mark is found at Ser-186 and Ser-187. At Thr-190 the chain carries Phosphothreonine; by MKK5. The short motif at 190 to 192 (TQY) is the TQY element. Tyr-192 carries the phosphotyrosine; by MKK5 modification.

It belongs to the protein kinase superfamily. CMGC Ser/Thr protein kinase family. MAP kinase subfamily. It depends on Mg(2+) as a cofactor. In terms of processing, dually phosphorylated on Thr-190 and Tyr-192, which activates the enzyme.

The enzyme catalyses L-seryl-[protein] + ATP = O-phospho-L-seryl-[protein] + ADP + H(+). It catalyses the reaction L-threonyl-[protein] + ATP = O-phospho-L-threonyl-[protein] + ADP + H(+). In terms of biological role, essential for the two main proliferating life stages, the promastigotes and amastigotes, of the parasite. This Leishmania mexicana protein is Mitogen-activated protein kinase 4.